Consider the following 368-residue polypeptide: Peptide chain release factor 2 (368 aa).

Gln-249 carries the N5-methylglutamine modification.

It belongs to the prokaryotic/mitochondrial release factor family. Post-translationally, methylated by PrmC. Methylation increases the termination efficiency of RF2.

It is found in the cytoplasm. Functionally, peptide chain release factor 2 directs the termination of translation in response to the peptide chain termination codons UGA and UAA. In Rhodococcus jostii (strain RHA1), this protein is Peptide chain release factor 2.